The primary structure comprises 154 residues: Nucleoside diphosphate kinase A1 (154 aa).

6 residues coordinate ATP: K13, F61, R89, T95, R106, and N116. The Pros-phosphohistidine intermediate role is filled by H119.

It belongs to the NDK family. Requires Mg(2+) as cofactor.

The protein resides in the cytoplasm. It carries out the reaction a 2'-deoxyribonucleoside 5'-diphosphate + ATP = a 2'-deoxyribonucleoside 5'-triphosphate + ADP. It catalyses the reaction a ribonucleoside 5'-diphosphate + ATP = a ribonucleoside 5'-triphosphate + ADP. In terms of biological role, major role in the synthesis of nucleoside triphosphates other than ATP. The ATP gamma phosphate is transferred to the NDP beta phosphate via a ping-pong mechanism, using a phosphorylated active-site intermediate. This is Nucleoside diphosphate kinase A1 from Xenopus laevis (African clawed frog).